Consider the following 332-residue polypeptide: tRNA-dihydrouridine synthase B (332 aa).

Residues 16-18 (PMA) and Gln70 each bind FMN. Residue Cys100 is the Proton donor of the active site. Residues Lys139, 200–202 (NGD), and 224–225 (GR) each bind FMN.

This sequence belongs to the Dus family. DusB subfamily. The cofactor is FMN.

It catalyses the reaction a 5,6-dihydrouridine in tRNA + NAD(+) = a uridine in tRNA + NADH + H(+). The enzyme catalyses a 5,6-dihydrouridine in tRNA + NADP(+) = a uridine in tRNA + NADPH + H(+). Catalyzes the synthesis of 5,6-dihydrouridine (D), a modified base found in the D-loop of most tRNAs, via the reduction of the C5-C6 double bond in target uridines. The chain is tRNA-dihydrouridine synthase B from Xanthomonas axonopodis pv. citri (strain 306).